A 512-amino-acid chain; its full sequence is ATP synthase subunit alpha (512 aa).

169-176 (GDRKTGKT) is a binding site for ATP.

Belongs to the ATPase alpha/beta chains family. In terms of assembly, F-type ATPases have 2 components, CF(1) - the catalytic core - and CF(0) - the membrane proton channel. CF(1) has five subunits: alpha(3), beta(3), gamma(1), delta(1), epsilon(1). CF(0) has three main subunits: a(1), b(2) and c(9-12). The alpha and beta chains form an alternating ring which encloses part of the gamma chain. CF(1) is attached to CF(0) by a central stalk formed by the gamma and epsilon chains, while a peripheral stalk is formed by the delta and b chains.

It localises to the cell membrane. The catalysed reaction is ATP + H2O + 4 H(+)(in) = ADP + phosphate + 5 H(+)(out). In terms of biological role, produces ATP from ADP in the presence of a proton gradient across the membrane. The alpha chain is a regulatory subunit. The sequence is that of ATP synthase subunit alpha from Limosilactobacillus fermentum (strain NBRC 3956 / LMG 18251) (Lactobacillus fermentum).